The sequence spans 352 residues: 4-hydroxy-2-oxovalerate aldolase (352 aa).

Residues 13–265 (VRLTDTSLRD…KTGIDFFDIA (253 aa)) form the Pyruvate carboxyltransferase domain. Residue 21 to 22 (RD) participates in substrate binding. Aspartate 22 lines the Mn(2+) pocket. The Proton acceptor role is filled by histidine 25. The substrate site is built by serine 175 and histidine 204. Mn(2+) is bound by residues histidine 204 and histidine 206. Tyrosine 295 lines the substrate pocket.

It belongs to the 4-hydroxy-2-oxovalerate aldolase family.

It carries out the reaction (S)-4-hydroxy-2-oxopentanoate = acetaldehyde + pyruvate. The protein is 4-hydroxy-2-oxovalerate aldolase of Mycobacterium avium (strain 104).